The chain runs to 661 residues: Heme transporter BhuA (661 aa).

Positions 1–23 (MKFTRTLVLASTFLLATVATSQA) are cleaved as a signal peptide. The TBDR plug domain occupies 48–159 (KDNIEATGGT…AAGAIRYETV (112 aa)). Residues 170 to 661 (TFGARIIGSY…TFTFQTAFKF (492 aa)) enclose the TBDR beta-barrel domain.

This sequence belongs to the TonB-dependent receptor family.

It is found in the cell outer membrane. In terms of biological role, heme transporter. The sequence is that of Heme transporter BhuA (bhuA) from Brucella suis biovar 1 (strain 1330).